A 497-amino-acid chain; its full sequence is Glycogen synthase (497 aa).

ADP-alpha-D-glucose is bound at residue Lys-15.

The protein belongs to the glycosyltransferase 1 family. Bacterial/plant glycogen synthase subfamily.

The enzyme catalyses [(1-&gt;4)-alpha-D-glucosyl](n) + ADP-alpha-D-glucose = [(1-&gt;4)-alpha-D-glucosyl](n+1) + ADP + H(+). It functions in the pathway glycan biosynthesis; glycogen biosynthesis. In terms of biological role, synthesizes alpha-1,4-glucan chains using ADP-glucose. The chain is Glycogen synthase from Thermodesulfovibrio yellowstonii (strain ATCC 51303 / DSM 11347 / YP87).